Consider the following 233-residue polypeptide: Phosducin-like protein C2A9.09 (233 aa).

Residues 58–212 (EDEEDDEFLQ…DIAALKDPQN (155 aa)) form the Phosducin domain. Residues 86-233 (FGSVYPISKP…VNDDLDDDFD (148 aa)) form a thioredoxin fold region. The interval 207 to 233 (LKDPQNAEDELGKRDSSVNDDLDDDFD) is disordered. Phosphoserine occurs at positions 222 and 223. Residues 224–233 (VNDDLDDDFD) are compositionally biased toward acidic residues.

The protein belongs to the phosducin family.

The sequence is that of Phosducin-like protein C2A9.09 from Schizosaccharomyces pombe (strain 972 / ATCC 24843) (Fission yeast).